Reading from the N-terminus, the 231-residue chain is Probable transglycosylase SceD (231 aa).

Residues 1–27 form the signal peptide; the sequence is MKKTLLASSLAVGLGIVAGNAGHEAHA. Residues 103–116 are compositionally biased toward polar residues; it reads APSAVQANQVQSQE. The disordered stretch occupies residues 103-153; sequence APSAVQANQVQSQEVEAPQNAQTQQPQASTSNNSQVTATPTESKSSEGSSV. Over residues 119–137 the composition is skewed to low complexity; sequence APQNAQTQQPQASTSNNSQ. Over residues 138-153 the composition is skewed to polar residues; sequence VTATPTESKSSEGSSV.

This sequence belongs to the transglycosylase family. SceD subfamily.

The protein resides in the secreted. In terms of biological role, is able to cleave peptidoglycan and affects clumping and separation of bacterial cells. The sequence is that of Probable transglycosylase SceD (sceD) from Staphylococcus aureus (strain COL).